Reading from the N-terminus, the 358-residue chain is Probable branched-chain-amino-acid aminotransferase (358 aa).

Position 196 is an N6-(pyridoxal phosphate)lysine (Lys-196).

It belongs to the class-IV pyridoxal-phosphate-dependent aminotransferase family. The cofactor is pyridoxal 5'-phosphate.

It catalyses the reaction L-leucine + 2-oxoglutarate = 4-methyl-2-oxopentanoate + L-glutamate. It carries out the reaction L-isoleucine + 2-oxoglutarate = (S)-3-methyl-2-oxopentanoate + L-glutamate. The enzyme catalyses L-valine + 2-oxoglutarate = 3-methyl-2-oxobutanoate + L-glutamate. It functions in the pathway amino-acid biosynthesis; L-isoleucine biosynthesis; L-isoleucine from 2-oxobutanoate: step 4/4. The protein operates within amino-acid biosynthesis; L-leucine biosynthesis; L-leucine from 3-methyl-2-oxobutanoate: step 4/4. It participates in amino-acid biosynthesis; L-valine biosynthesis; L-valine from pyruvate: step 4/4. Functionally, acts on leucine, isoleucine and valine. The protein is Probable branched-chain-amino-acid aminotransferase (ilvE) of Staphylococcus aureus (strain MRSA252).